Reading from the N-terminus, the 1026-residue chain is mRNA transport homolog 4 (1026 aa).

Positions 134-290 constitute a Helicase ATP-binding domain; the sequence is ILCIDNNQSV…WVASIKQQPV (157 aa). 147-154 is a binding site for ATP; it reads AHTSAGKT. The short motif at 238–241 is the DEIH box element; the sequence is DEIH. In terms of domain architecture, Helicase C-terminal spans 360–564; the sequence is NVLKIIRSVA…NMVLNLMRVE (205 aa).

The protein belongs to the helicase family. SKI2 subfamily.

It is found in the nucleus. The chain is mRNA transport homolog 4 (mtr-4) from Caenorhabditis elegans.